We begin with the raw amino-acid sequence, 497 residues long: Cytoplasmic dynein 1 light intermediate chain 2 (497 aa).

61 to 68 (GEDGSGKT) contacts ATP. Disordered regions lie at residues 187-206 (PEEG…SGSD), 366-408 (QQES…IKNN), 423-461 (LSKK…TEQC), and 474-497 (QEEL…ENEA). 3 positions are modified to phosphoserine: Ser194, Ser369, and Ser377. Arg383 carries the post-translational modification Omega-N-methylarginine. Over residues 423–444 (LSKKTGSPGSPSAGGVQSTAKK) the composition is skewed to polar residues. Thr427 carries the phosphothreonine modification. Phosphoserine occurs at positions 429 and 432. A compositionally biased stretch (basic and acidic residues) spans 476–485 (ELDRMTRKPD). The span at 487–497 (MVTNSSTENEA) shows a compositional bias: polar residues.

It belongs to the dynein light intermediate chain family. Homodimer. The cytoplasmic dynein 1 complex consists of two catalytic heavy chains (HCs) and a number of non-catalytic subunits presented by intermediate chains (ICs), light intermediate chains (LICs) and light chains (LCs); the composition seems to vary in respect to the IC, LIC and LC composition. The heavy chain homodimer serves as a scaffold for the probable homodimeric assembly of the respective non-catalytic subunits. The ICs and LICs bind directly to the HC dimer and the LCs assemble on the IC dimer. Self-associates. Interacts with DYNC1H1; DYNC1LI1 and DYNC1LI2 bind mutually exclusive to DYNC1H1. In terms of tissue distribution, ubiquitous.

The protein resides in the cytoplasm. It localises to the cytoskeleton. Functionally, acts as one of several non-catalytic accessory components of the cytoplasmic dynein 1 complex that are thought to be involved in linking dynein to cargos and to adapter proteins that regulate dynein function. Cytoplasmic dynein 1 acts as a motor for the intracellular retrograde motility of vesicles and organelles along microtubules. May play a role in binding dynein to membranous organelles or chromosomes. This chain is Cytoplasmic dynein 1 light intermediate chain 2 (Dync1li2), found in Rattus norvegicus (Rat).